A 364-amino-acid polypeptide reads, in one-letter code: Chorismate synthase (364 aa).

Positions 48 and 54 each coordinate NADP(+). FMN is bound by residues R125–S127, G282, K297–S301, and R323.

This sequence belongs to the chorismate synthase family. In terms of assembly, homotetramer. Requires FMNH2 as cofactor.

It carries out the reaction 5-O-(1-carboxyvinyl)-3-phosphoshikimate = chorismate + phosphate. It functions in the pathway metabolic intermediate biosynthesis; chorismate biosynthesis; chorismate from D-erythrose 4-phosphate and phosphoenolpyruvate: step 7/7. In terms of biological role, catalyzes the anti-1,4-elimination of the C-3 phosphate and the C-6 proR hydrogen from 5-enolpyruvylshikimate-3-phosphate (EPSP) to yield chorismate, which is the branch point compound that serves as the starting substrate for the three terminal pathways of aromatic amino acid biosynthesis. This reaction introduces a second double bond into the aromatic ring system. In Chloroflexus aggregans (strain MD-66 / DSM 9485), this protein is Chorismate synthase.